The primary structure comprises 245 residues: Probable 2-phosphosulfolactate phosphatase (245 aa).

It belongs to the ComB family. It depends on Mg(2+) as a cofactor.

The catalysed reaction is (2R)-O-phospho-3-sulfolactate + H2O = (2R)-3-sulfolactate + phosphate. The protein is Probable 2-phosphosulfolactate phosphatase of Nostoc sp. (strain PCC 7120 / SAG 25.82 / UTEX 2576).